We begin with the raw amino-acid sequence, 620 residues long: Probable potassium transport system protein Kup 1 (620 aa).

The next 12 helical transmembrane spans lie at 7 to 27, 50 to 70, 102 to 122, 136 to 156, 168 to 188, 211 to 231, 246 to 266, 284 to 304, 336 to 356, 368 to 388, 393 to 413, and 415 to 435; these read GIGLLVSAIGVVFGDIGTSPL, VLSLVFWTVMLLVTVKYVIVI, MMLGVIAAALFYGDSMITPAI, PDLKAYVVPITAVVLTLLFAI, FGPVMCMWFLTLALLGIANIV, LMSFYALGSVVLAVTGGEALY, WFGLVLPALLLNYFGQGALLI, MVVPMVALATLATVIASQAVI, IYVPFTNWTLYFAVMALVVGF, IAVTGTMMIDTILVSFVAALL, PVVVAVVIGTLLLLDFAFFAA, and IIKVAQGGWFPLFIGFISFTV.

Belongs to the HAK/KUP transporter (TC 2.A.72) family.

Its subcellular location is the cell inner membrane. The catalysed reaction is K(+)(in) + H(+)(in) = K(+)(out) + H(+)(out). Functionally, transport of potassium into the cell. Likely operates as a K(+):H(+) symporter. The protein is Probable potassium transport system protein Kup 1 of Rhodopseudomonas palustris (strain ATCC BAA-98 / CGA009).